Consider the following 592-residue polypeptide: Aspartate--tRNA ligase (592 aa).

An L-aspartate-binding site is contributed by glutamate 173. The aspartate stretch occupies residues 197-200 (QLFK). Arginine 219 is an L-aspartate binding site. ATP-binding positions include 219 to 221 (RDE) and glutamine 228. Position 449 (histidine 449) interacts with L-aspartate. Glutamate 483 serves as a coordination point for ATP. Arginine 490 serves as a coordination point for L-aspartate. 535 to 538 (GLDR) lines the ATP pocket.

Belongs to the class-II aminoacyl-tRNA synthetase family. Type 1 subfamily. In terms of assembly, homodimer.

The protein localises to the cytoplasm. It carries out the reaction tRNA(Asp) + L-aspartate + ATP = L-aspartyl-tRNA(Asp) + AMP + diphosphate. In terms of biological role, catalyzes the attachment of L-aspartate to tRNA(Asp) in a two-step reaction: L-aspartate is first activated by ATP to form Asp-AMP and then transferred to the acceptor end of tRNA(Asp). This is Aspartate--tRNA ligase from Shewanella loihica (strain ATCC BAA-1088 / PV-4).